Consider the following 511-residue polypeptide: MAAALTDMADLEELSRLSPLPPGSPGPAARGRAEPPEEEEEEDEEEEAEAEAVAALLLNGGGGGGGVGGGEAETMSEPSPESASQAGEDDDEEEDDDEEEEDESSSGGGEEESSAESLVGSSSGGSSSDETRSLSPGAASSSSGDGDGKEGLEEPKGPRGSQGGGGGGSSSSSVVSSGGDEGYGTGGGGSSATSGGRRGSLEMSSDGEPLSRMDSEDSISSTIMDVDSTISSGRSTPAMMNGQGSTTSSSKNIAYNCCWDQCQACFTSSPDLADHIRSIHVDGQRGGVFVCLWKGCKVYNTPSTSQSWLQRHMLTHSGDKPFKCVVGGCNASFASQGGLARHVPTHFSQQNSSKVSSQPKAKEESPSKAGMNKRRKLKNKRRRSLPRPHDFFDAQTLDAIRHRAICFNLSAHIESLGKGHSVVFHSTVIAKRKEDSGKIKLLLHWMPEDILPDVWVNESERHQLKTKVVHLSKLPKDTALLLDPNIYRTMPQKRLKRTLIRKVFNLYLSKQ.

The interval 1 to 223 (MAAALTDMAD…DSEDSISSTI (223 aa)) is disordered. The residue at position 2 (A2) is an N-acetylalanine. S18 and S24 each carry phosphoserine. The segment covering 36–50 (PEEEEEEDEEEEAEA) has biased composition (acidic residues). The segment covering 59 to 71 (NGGGGGGGVGGGE) has biased composition (gly residues). A compositionally biased stretch (acidic residues) spans 87–114 (GEDDDEEEDDDEEEEDESSSGGGEEESS). Residues 115-144 (AESLVGSSSGGSSSDETRSLSPGAASSSSG) are compositionally biased toward low complexity. Residue S135 is modified to Phosphoserine. Residues 146 to 157 (GDGKEGLEEPKG) are compositionally biased toward basic and acidic residues. 2 stretches are compositionally biased toward gly residues: residues 160-169 (GSQGGGGGGS) and 179-190 (GDEGYGTGGGGS). Phosphoserine occurs at positions 200, 204, and 205. The tract at residues 203 to 288 (MSSDGEPLSR…IHVDGQRGGV (86 aa)) is interaction with RBBP4. Residues 255-280 (YNCCWDQCQACFTSSPDLADHIRSIH) form a C2H2-type 1 zinc finger. Residues 294–316 (KGCKVYNTPSTSQSWLQRHMLTH) form a C2H2-type 2; degenerate zinc finger. Residues 322–346 (FKCVVGGCNASFASQGGLARHVPTH) form a C2H2-type 3 zinc finger. Positions 346–359 (HFSQQNSSKVSSQP) are enriched in polar residues. Positions 346–388 (HFSQQNSSKVSSQPKAKEESPSKAGMNKRRKLKNKRRRSLPRP) are disordered. Residues 371-386 (MNKRRKLKNKRRRSLP) are compositionally biased toward basic residues. At S384 the chain carries Phosphoserine. Residues 401 to 472 (RHRAICFNLS…QLKTKVVHLS (72 aa)) are interaction with SUZ12. An important for nucleosome binding activity of the PRC2 complex region spans residues 489–511 (TMPQKRLKRTLIRKVFNLYLSKQ).

Belongs to the AEBP2/jing C2H2-type zinc-finger family. Self-associates. Associates with the PRC2 complex, which consists of the core components EED, EZH1 or EZH2, SUZ12, and RBBP4, and various combinations of accessory subunits including AEBP2, JARID2, PHF19, MTF2 and EPOP. Found in a monomeric PRC2.2 (class 2) complex consisting of at least SUZ12, RBBP4, AEBP2 and JARID2. Within the PRC2 complex, interacts directly with SUZ12; competes with PHF19 for SUZ12 binding. Interacts with EED, EZH2, and RBBP4. May also interact with RBBP7.

It localises to the nucleus. In terms of biological role, acts as an accessory subunit for the core Polycomb repressive complex 2 (PRC2), which mediates histone H3K27 (H3K27me3) trimethylation on chromatin leading to transcriptional repression of the affected target gene. Plays a role in nucleosome localization of the PRC2 complex. The chain is Zinc finger protein AEBP2 (AEBP2) from Bos taurus (Bovine).